A 302-amino-acid polypeptide reads, in one-letter code: Spermidine synthase (302 aa).

The residue at position 1 (Met1) is an N-acetylmethionine. Residues 18–253 (EGWFRETCSL…GQIGFMLCSK (236 aa)) enclose the PABS domain. Residue Gln49 participates in S-adenosyl 3-(methylsulfanyl)propylamine binding. A putrescine-binding site is contributed by Tyr79. S-adenosyl 3-(methylsulfanyl)propylamine is bound by residues Gln80, Asp104, Glu124, 155-156 (DG), and Asp173. Asp173 acts as the Proton acceptor in catalysis. Residues 173 to 176 (DSSD) and Tyr241 each bind putrescine.

Belongs to the spermidine/spermine synthase family. Homodimer or homotetramer.

The enzyme catalyses S-adenosyl 3-(methylsulfanyl)propylamine + putrescine = S-methyl-5'-thioadenosine + spermidine + H(+). Its pathway is amine and polyamine biosynthesis; spermidine biosynthesis; spermidine from putrescine: step 1/1. The activity is thought to be regulated mainly by the availability of decarboxylated S-adenosylmethionine. Its function is as follows. Catalyzes the production of spermidine from putrescine and decarboxylated S-adenosylmethionine (dcSAM). Has a strong preference for putrescine as substrate, and has very low activity towards 1,3-diaminopropane. Has extremely low activity towards spermidine. The polypeptide is Spermidine synthase (SRM) (Homo sapiens (Human)).